A 142-amino-acid polypeptide reads, in one-letter code: ATP synthase epsilon chain, chloroplastic (142 aa).

The protein belongs to the ATPase epsilon chain family. F-type ATPases have 2 components, CF(1) - the catalytic core - and CF(0) - the membrane proton channel. CF(1) has five subunits: alpha(3), beta(3), gamma(1), delta(1), epsilon(1). CF(0) has three main subunits: a, b and c.

The protein localises to the plastid. It localises to the chloroplast thylakoid membrane. In terms of biological role, produces ATP from ADP in the presence of a proton gradient across the membrane. This chain is ATP synthase epsilon chain, chloroplastic, found in Ostreococcus tauri.